We begin with the raw amino-acid sequence, 78 residues long: Small ribosomal subunit protein bS16c (78 aa).

This sequence belongs to the bacterial ribosomal protein bS16 family.

It is found in the plastid. The protein localises to the chloroplast. The chain is Small ribosomal subunit protein bS16c from Panax ginseng (Korean ginseng).